Here is a 317-residue protein sequence, read N- to C-terminus: tRNA dimethylallyltransferase (317 aa).

Gly-19–Ser-26 is a binding site for ATP. Residue Thr-21–Ser-26 coordinates substrate. The segment at Asp-44–Gln-47 is interaction with substrate tRNA.

The protein belongs to the IPP transferase family. In terms of assembly, monomer. The cofactor is Mg(2+).

It carries out the reaction adenosine(37) in tRNA + dimethylallyl diphosphate = N(6)-dimethylallyladenosine(37) in tRNA + diphosphate. Catalyzes the transfer of a dimethylallyl group onto the adenine at position 37 in tRNAs that read codons beginning with uridine, leading to the formation of N6-(dimethylallyl)adenosine (i(6)A). In Methylorubrum populi (strain ATCC BAA-705 / NCIMB 13946 / BJ001) (Methylobacterium populi), this protein is tRNA dimethylallyltransferase.